A 378-amino-acid polypeptide reads, in one-letter code: Alkanesulfonate monooxygenase (378 aa).

This sequence belongs to the SsuD family.

It carries out the reaction an alkanesulfonate + FMNH2 + O2 = an aldehyde + FMN + sulfite + H2O + 2 H(+). Its function is as follows. Catalyzes the desulfonation of aliphatic sulfonates. The protein is Alkanesulfonate monooxygenase of Bacillus velezensis (strain DSM 23117 / BGSC 10A6 / LMG 26770 / FZB42) (Bacillus amyloliquefaciens subsp. plantarum).